A 421-amino-acid polypeptide reads, in one-letter code: MSDTAELTTDPTPDLTKGDTITVEVTRPAHGGEGIAHHGGRVIFVRGGFPGDDVDVEITQVKKRFARGFVVQVNVASPHRVDSRCPAAAAGAGCCDYAELSPEAELEIKSRVLTDQLQRIGGLADIPTPELFELEPSQGWRTRVRLGVDASGRAGFRKLRSNDLVTDVACSQVVPELIDGLVGPGARTFTPDSEVIAAIDDRGVRTVVEVRKAPRGRRAETILHVLEGDGSVEQTVGDHTWTFPVSGFWQAHTKAPGAYSAFIGEVLDGAELVDVDKRGPVAWDLYGGVGLFVPVINRALGAHVHSVELSEGSAEAGDDALAGLPVTFHAGRVESVTSQLPKPHVVVLDPPRTGAGSDVVATIAGAKPQLVVHIGCDPATFARDVADWSAGGYTLDRLAVFNAFPATHHYETIGVFTRKSA.

Residues 14–72 (DLTKGDTITVEVTRPAHGGEGIAHHGGRVIFVRGGFPGDDVDVEITQVKKRFARGFVVQ) enclose the TRAM domain. Residues Gln-250, Tyr-286, Glu-308, and Asp-349 each contribute to the S-adenosyl-L-methionine site. Residue Cys-376 is the Nucleophile of the active site.

The protein belongs to the class I-like SAM-binding methyltransferase superfamily. RNA M5U methyltransferase family.

This is an uncharacterized protein from Corynebacterium efficiens (strain DSM 44549 / YS-314 / AJ 12310 / JCM 11189 / NBRC 100395).